Reading from the N-terminus, the 129-residue chain is Follitropin subunit beta (129 aa).

Positions 1–20 (MKSVQFCFLFCCWRAICCRS) are cleaved as a signal peptide. Cystine bridges form between Cys21-Cys69, Cys35-Cys84, Cys38-Cys122, Cys46-Cys100, Cys50-Cys102, and Cys105-Cys112. N-linked (GlcNAc...) asparagine glycosylation is found at Asn25 and Asn42.

Belongs to the glycoprotein hormones subunit beta family. In terms of assembly, heterodimer. The active follitropin is a heterodimer composed of an alpha chain/CGA shared with other hormones and a unique beta chain/FSHB shown here.

The protein resides in the secreted. Together with the alpha chain CGA constitutes follitropin, the follicle-stimulating hormone, and provides its biological specificity to the hormone heterodimer. Binds FSHR, a G protein-coupled receptor, on target cells to activate downstream signaling pathways. Follitropin is involved in follicle development and spermatogenesis in reproductive organs. The protein is Follitropin subunit beta (FSHB) of Bubalus bubalis (Domestic water buffalo).